The chain runs to 497 residues: Lysine--tRNA ligase (497 aa).

2 residues coordinate Mg(2+): E409 and E416.

Belongs to the class-II aminoacyl-tRNA synthetase family. As to quaternary structure, homodimer. Requires Mg(2+) as cofactor.

It is found in the cytoplasm. The catalysed reaction is tRNA(Lys) + L-lysine + ATP = L-lysyl-tRNA(Lys) + AMP + diphosphate. The protein is Lysine--tRNA ligase of Streptococcus pyogenes serotype M6 (strain ATCC BAA-946 / MGAS10394).